A 210-amino-acid polypeptide reads, in one-letter code: N-(5'-phosphoribosyl)anthranilate isomerase (210 aa).

Belongs to the TrpF family.

The enzyme catalyses N-(5-phospho-beta-D-ribosyl)anthranilate = 1-(2-carboxyphenylamino)-1-deoxy-D-ribulose 5-phosphate. The protein operates within amino-acid biosynthesis; L-tryptophan biosynthesis; L-tryptophan from chorismate: step 3/5. This is N-(5'-phosphoribosyl)anthranilate isomerase from Staphylococcus aureus (strain bovine RF122 / ET3-1).